The sequence spans 147 residues: MAERNEQLERLAYEYQLLQAQAQLLAQNLELLTLGRNEFQAVKQTLEELKKVEDEKPEILVPIGAGSFLKGMIVDKNSAIVSVGSGYATEKSLDDAIGYLDARIKEYDEAIRKTQEALAKLEGQLQELAQKAQKLQQEAAMRFSVKE.

The protein belongs to the prefoldin alpha subunit family. Heterohexamer of two alpha and four beta subunits.

The protein localises to the cytoplasm. In terms of biological role, molecular chaperone capable of stabilizing a range of proteins. Seems to fulfill an ATP-independent, HSP70-like function in archaeal de novo protein folding. This Thermococcus onnurineus (strain NA1) protein is Prefoldin subunit alpha.